A 72-amino-acid polypeptide reads, in one-letter code: Dermaseptin AA-3-4 (72 aa).

The signal sequence occupies residues 1–22 (MAFLKKSLFLVLFLGLVSLSIC). Positions 23–43 (DEEKRENEDEEEQEDDEQSEE) are excised as a propeptide. Residues 24 to 45 (EEKRENEDEEEQEDDEQSEEKR) are disordered. Acidic residues predominate over residues 30–41 (EDEEEQEDDEQS).

It belongs to the frog skin active peptide (FSAP) family. As to expression, expressed by the skin glands.

It localises to the secreted. Its function is as follows. Possesses a potent antimicrobial activity against Gram-positive and Gram-negative bacteria. Probably acts by disturbing membrane functions with its amphipathic structure. This Agalychnis annae (Blue-sided leaf frog) protein is Dermaseptin AA-3-4.